Consider the following 508-residue polypeptide: Photosystem II CP47 reaction center protein (508 aa).

Transmembrane regions (helical) follow at residues Ser-21–Ser-36, Ile-101–Trp-115, Gly-140–Phe-156, Ile-203–Leu-218, Val-237–Val-252, and Ser-457–Arg-472.

Belongs to the PsbB/PsbC family. PsbB subfamily. PSII is composed of 1 copy each of membrane proteins PsbA, PsbB, PsbC, PsbD, PsbE, PsbF, PsbH, PsbI, PsbJ, PsbK, PsbL, PsbM, PsbT, PsbY, PsbZ, Psb30/Ycf12, at least 3 peripheral proteins of the oxygen-evolving complex and a large number of cofactors. It forms dimeric complexes. The cofactor is Binds multiple chlorophylls. PSII binds additional chlorophylls, carotenoids and specific lipids..

The protein resides in the plastid. Its subcellular location is the chloroplast thylakoid membrane. Its function is as follows. One of the components of the core complex of photosystem II (PSII). It binds chlorophyll and helps catalyze the primary light-induced photochemical processes of PSII. PSII is a light-driven water:plastoquinone oxidoreductase, using light energy to abstract electrons from H(2)O, generating O(2) and a proton gradient subsequently used for ATP formation. In Euglena gracilis, this protein is Photosystem II CP47 reaction center protein.